A 311-amino-acid chain; its full sequence is Transcription factor bHLH145 (311 aa).

A bHLH domain is found at 253–302 (FLKRSKLSSNKIGEEKIFETVSLLRSVVPGEELVDPILVIDRAIDYLKSL).

Homodimer.

It is found in the nucleus. This Arabidopsis thaliana (Mouse-ear cress) protein is Transcription factor bHLH145 (BHLH145).